Consider the following 295-residue polypeptide: MDSHRPVLLNEMLELLSPKDGAVYVDATFGGGGYSRGILERAKCTVLAIDQDPIASEFYQSLHSQFPGRVHFFLSKFSRLREALQHFDHNQVDGVVFDVGVSSMQLSDPDRGFSFMKEGPLDMRMDMLRSQSKSAATFVNSLSEKDMADVIFYYGGERLSRRVTRAIISARESNNKIRNTSDLAKIIRSVVPRSKANPIDPATRTFQAIRIWVNDELEELKAGLEAASQIVGVGGKIIVTSFHSLEDRIVKHKFNALREKGFQLINKKAIKPTEKEISENTRSRSAKLRGIVKEE.

S-adenosyl-L-methionine contacts are provided by residues 32–34, D50, F77, D98, and Q105; that span reads GGY. The tract at residues 275-295 is disordered; it reads KEISENTRSRSAKLRGIVKEE.

Belongs to the methyltransferase superfamily. RsmH family.

It is found in the cytoplasm. It carries out the reaction cytidine(1402) in 16S rRNA + S-adenosyl-L-methionine = N(4)-methylcytidine(1402) in 16S rRNA + S-adenosyl-L-homocysteine + H(+). In terms of biological role, specifically methylates the N4 position of cytidine in position 1402 (C1402) of 16S rRNA. The polypeptide is Ribosomal RNA small subunit methyltransferase H (Anaplasma phagocytophilum (strain HZ)).